The sequence spans 218 residues: Large ribosomal subunit protein eL13 (218 aa).

The interval 196–218 (AKRAKEAAESEDAAKGDPKKAKK) is disordered. Over residues 199–218 (AKEAAESEDAAKGDPKKAKK) the composition is skewed to basic and acidic residues.

It belongs to the eukaryotic ribosomal protein eL13 family. As to quaternary structure, component of the 60S large ribosomal subunit (LSU).

It localises to the cytoplasm. Component of the ribosome, a large ribonucleoprotein complex responsible for the synthesis of proteins in the cell. The small ribosomal subunit (SSU) binds messenger RNAs (mRNAs) and translates the encoded message by selecting cognate aminoacyl-transfer RNA (tRNA) molecules. The large subunit (LSU) contains the ribosomal catalytic site termed the peptidyl transferase center (PTC), which catalyzes the formation of peptide bonds, thereby polymerizing the amino acids delivered by tRNAs into a polypeptide chain. The nascent polypeptides leave the ribosome through a tunnel in the LSU and interact with protein factors that function in enzymatic processing, targeting, and the membrane insertion of nascent chains at the exit of the ribosomal tunnel. As part of the LSU, it is probably required for its formation and the maturation of rRNAs. This is Large ribosomal subunit protein eL13 (RpL13) from Drosophila melanogaster (Fruit fly).